We begin with the raw amino-acid sequence, 429 residues long: GTPase Obg (429 aa).

Residues 1-158 (MFVDHVKIYV…LNVILELKVL (158 aa)) enclose the Obg domain. The segment at 119–143 (AGRGGRGNSRFATPANPAPELSEKG) is disordered. The 171-residue stretch at 159-329 (ADVGLVGFPS…LLFAIADLLE (171 aa)) folds into the OBG-type G domain. Residues 165 to 172 (GFPSVGKS), 190 to 194 (FTTIV), 212 to 215 (DLPG), 282 to 285 (NKMD), and 310 to 312 (SAV) contribute to the GTP site. Residues S172 and T192 each coordinate Mg(2+). Positions 351-429 (KHEAKGEDFE…LQEFEFEFVD (79 aa)) constitute an OCT domain.

Belongs to the TRAFAC class OBG-HflX-like GTPase superfamily. OBG GTPase family. Monomer. The cofactor is Mg(2+).

The protein localises to the cytoplasm. Functionally, an essential GTPase which binds GTP, GDP and possibly (p)ppGpp with moderate affinity, with high nucleotide exchange rates and a fairly low GTP hydrolysis rate. Plays a role in control of the cell cycle, stress response, ribosome biogenesis and in those bacteria that undergo differentiation, in morphogenesis control. The sequence is that of GTPase Obg from Lysinibacillus sphaericus (strain C3-41).